The following is a 218-amino-acid chain: Large ribosomal subunit protein uL3 (218 aa).

The disordered stretch occupies residues 127–167; sequence GFSRGPMSHGSKNHREPGSTGAGTTPGRIYPGKRMAGRYGG.

The protein belongs to the universal ribosomal protein uL3 family. Part of the 50S ribosomal subunit. Forms a cluster with proteins L14 and L19.

One of the primary rRNA binding proteins, it binds directly near the 3'-end of the 23S rRNA, where it nucleates assembly of the 50S subunit. The protein is Large ribosomal subunit protein uL3 of Prochlorococcus marinus (strain MIT 9303).